Here is a 162-residue protein sequence, read N- to C-terminus: Allantoicase (162 aa).

Belongs to the allantoicase family. In terms of assembly, homohexamer. As to expression, expressed in zygote.

It catalyses the reaction allantoate + H2O = (S)-ureidoglycolate + urea. The protein operates within nitrogen metabolism; (S)-allantoin degradation; (S)-ureidoglycolate from allantoate (aminidohydrolase route): step 1/1. Catalyzes the degradation of allantoate to (-)-ureidoglycolate and (+)-ureidoglycolate to glyoxylate. This is Allantoicase from Chlamydomonas reinhardtii (Chlamydomonas smithii).